The following is a 737-amino-acid chain: MAKQVFQTTFAGRELIVETGQVAKQANGSVVVRYGESTVLTAAVMSKKMATGDFFPLQVNYEEKMYAAGKFPGGFMKREGRPSTDATLTARLIDRPIRPMFAEGFRNEVQVINTVLSYDENASAPMAAMFGSSLALSISDIPFDGPIAGVQVGYVDGQIIINPSQEQAEQSLLELTVAGTKHAINMVESGAKELSEEIMLEALLKGHEAVKELIAFQEEIVAAVGKEKAEVELLHVDAELQAEIIAAYNSDLQKAVQVEEKLAREAATQAVKDQVTAVYEEKYADHEEFDRIMRDVAEILEQMEHAEVRRLITEDKVRPDGRKVDEIRPLDAVVDFLPRVHGSGLFTRGQTQALSVLTLAPMGETQIIDGLDPEYKKRFMHHYNFPQYSVGETGRYGAPGRREIGHGALGERALAQVLPSLEEFPYAIRLVAEVLESNGSSSQASICAGTLALMAGGVPIKAPVAGIAMGLISDGNNYTVLTDIQGLEDHFGDMDFKVAGTRDGITALQMDIKIQGITAEILTEALAQAKKARFEILDVIEATIPEVRPELAPTAPKIDTIKIDVDKIKIVIGKGGETIDKIIAETGVKIDIDEEGNVSIYSSDQDAINRAKEIIAGLVREAKVDEVYRAKVVRIEKFGAFVNLFDKTDALVHISEMAWTRTNRVEDLVEIGDEVDVKVIKIDEKGRIDASMKALLPRPPKPEHDEKGEKSERPHRPRHHKDHKPKKEFTETPKDSE.

The Mg(2+) site is built by D489 and D495. A KH domain is found at 556–615 (PKIDTIKIDVDKIKIVIGKGGETIDKIIAETGVKIDIDEEGNVSIYSSDQDAINRAKEII). The S1 motif domain occupies 625-693 (DEVYRAKVVR…EKGRIDASMK (69 aa)). The disordered stretch occupies residues 691 to 737 (SMKALLPRPPKPEHDEKGEKSERPHRPRHHKDHKPKKEFTETPKDSE). Residues 700-714 (PKPEHDEKGEKSERP) show a composition bias toward basic and acidic residues. Positions 715 to 724 (HRPRHHKDHK) are enriched in basic residues. Positions 725–737 (PKKEFTETPKDSE) are enriched in basic and acidic residues.

The protein belongs to the polyribonucleotide nucleotidyltransferase family. Requires Mg(2+) as cofactor.

Its subcellular location is the cytoplasm. The enzyme catalyses RNA(n+1) + phosphate = RNA(n) + a ribonucleoside 5'-diphosphate. Its function is as follows. Involved in mRNA degradation. Catalyzes the phosphorolysis of single-stranded polyribonucleotides processively in the 3'- to 5'-direction. This chain is Polyribonucleotide nucleotidyltransferase, found in Streptococcus pneumoniae (strain Taiwan19F-14).